The following is a 504-amino-acid chain: Histidine ammonia-lyase (504 aa).

Positions 142-144 (ASG) form a cross-link, 5-imidazolinone (Ala-Gly). At Ser143 the chain carries 2,3-didehydroalanine (Ser).

The protein belongs to the PAL/histidase family. Contains an active site 4-methylidene-imidazol-5-one (MIO), which is formed autocatalytically by cyclization and dehydration of residues Ala-Ser-Gly.

The protein localises to the cytoplasm. It catalyses the reaction L-histidine = trans-urocanate + NH4(+). The protein operates within amino-acid degradation; L-histidine degradation into L-glutamate; N-formimidoyl-L-glutamate from L-histidine: step 1/3. This is Histidine ammonia-lyase from Staphylococcus aureus (strain JH1).